The primary structure comprises 332 residues: Cyclin-D1-binding protein 1 (332 aa).

The residue at position 2 (Ala2) is an N-acetylalanine. 2 interaction with TCF3 regions span residues 2–184 (ASAT…VDFV) and 150–332 (ISYN…CLLD). Interaction with RPLP0 regions lie at residues 2–190 (ASAT…AHEE) and 240–332 (LIIP…CLLD). The segment at 2–208 (ASATAPAAAA…DPYSGLLNDT (207 aa)) is required for interaction with CCND1.

This sequence belongs to the CCNDBP1 family. In terms of assembly, interacts with CCND1 and GRAP2. May also interact with COPS5, RPLP0, SIRT6, SYF2 and TCF3. In terms of processing, phosphorylated.

Its subcellular location is the cytoplasm. It localises to the nucleus. Its function is as follows. May negatively regulate cell cycle progression. May act at least in part via inhibition of the cyclin-D1/CDK4 complex, thereby preventing phosphorylation of RB1 and blocking E2F-dependent transcription. The protein is Cyclin-D1-binding protein 1 (CCNDBP1) of Macaca fascicularis (Crab-eating macaque).